An 860-amino-acid polypeptide reads, in one-letter code: Leucine--tRNA ligase (860 aa).

Positions 42–52 (PYPSGRLHMGH) match the 'HIGH' region motif. A 'KMSKS' region motif is present at residues 619 to 623 (KMSKS). Lys622 serves as a coordination point for ATP.

This sequence belongs to the class-I aminoacyl-tRNA synthetase family.

It is found in the cytoplasm. It carries out the reaction tRNA(Leu) + L-leucine + ATP = L-leucyl-tRNA(Leu) + AMP + diphosphate. This Salmonella choleraesuis (strain SC-B67) protein is Leucine--tRNA ligase.